Consider the following 331-residue polypeptide: Phosphate acyltransferase (331 aa).

Belongs to the PlsX family. As to quaternary structure, homodimer. Probably interacts with PlsY.

The protein localises to the cytoplasm. It catalyses the reaction a fatty acyl-[ACP] + phosphate = an acyl phosphate + holo-[ACP]. Its pathway is lipid metabolism; phospholipid metabolism. Its function is as follows. Catalyzes the reversible formation of acyl-phosphate (acyl-PO(4)) from acyl-[acyl-carrier-protein] (acyl-ACP). This enzyme utilizes acyl-ACP as fatty acyl donor, but not acyl-CoA. In Malacoplasma penetrans (strain HF-2) (Mycoplasma penetrans), this protein is Phosphate acyltransferase.